The sequence spans 449 residues: Bifunctional protein GlmU (449 aa).

The interval 1-226 (MVIVAVLAAG…YEEILGVNDR (226 aa)) is pyrophosphorylase. UDP-N-acetyl-alpha-D-glucosamine-binding positions include 7–10 (LAAG), Lys-21, Gln-73, and 78–79 (GT). Mg(2+) is bound at residue Asp-103. Residues Gly-140, Glu-155, Asn-170, and Asn-224 each contribute to the UDP-N-acetyl-alpha-D-glucosamine site. Residue Asn-224 participates in Mg(2+) binding. Positions 227–247 (VQLAAAYQVLQNRIKKAWMQA) are linker. The tract at residues 248-449 (GVTLIDPASI…VVKPNWEPEA (202 aa)) is N-acetyltransferase. Residues Arg-329 and Lys-347 each coordinate UDP-N-acetyl-alpha-D-glucosamine. His-359 functions as the Proton acceptor in the catalytic mechanism. Residues Tyr-362 and Asn-373 each coordinate UDP-N-acetyl-alpha-D-glucosamine. Acetyl-CoA-binding positions include Ala-376, 382 to 383 (NY), Ala-419, and Arg-436.

This sequence in the N-terminal section; belongs to the N-acetylglucosamine-1-phosphate uridyltransferase family. In the C-terminal section; belongs to the transferase hexapeptide repeat family. As to quaternary structure, homotrimer. Mg(2+) serves as cofactor.

The protein resides in the cytoplasm. The enzyme catalyses alpha-D-glucosamine 1-phosphate + acetyl-CoA = N-acetyl-alpha-D-glucosamine 1-phosphate + CoA + H(+). The catalysed reaction is N-acetyl-alpha-D-glucosamine 1-phosphate + UTP + H(+) = UDP-N-acetyl-alpha-D-glucosamine + diphosphate. Its pathway is nucleotide-sugar biosynthesis; UDP-N-acetyl-alpha-D-glucosamine biosynthesis; N-acetyl-alpha-D-glucosamine 1-phosphate from alpha-D-glucosamine 6-phosphate (route II): step 2/2. The protein operates within nucleotide-sugar biosynthesis; UDP-N-acetyl-alpha-D-glucosamine biosynthesis; UDP-N-acetyl-alpha-D-glucosamine from N-acetyl-alpha-D-glucosamine 1-phosphate: step 1/1. It functions in the pathway bacterial outer membrane biogenesis; LPS lipid A biosynthesis. Catalyzes the last two sequential reactions in the de novo biosynthetic pathway for UDP-N-acetylglucosamine (UDP-GlcNAc). The C-terminal domain catalyzes the transfer of acetyl group from acetyl coenzyme A to glucosamine-1-phosphate (GlcN-1-P) to produce N-acetylglucosamine-1-phosphate (GlcNAc-1-P), which is converted into UDP-GlcNAc by the transfer of uridine 5-monophosphate (from uridine 5-triphosphate), a reaction catalyzed by the N-terminal domain. This is Bifunctional protein GlmU from Thermosynechococcus vestitus (strain NIES-2133 / IAM M-273 / BP-1).